A 205-amino-acid polypeptide reads, in one-letter code: GTP-binding protein rho3 (205 aa).

20-27 (GDGAAGKT) contributes to the GTP binding site. Residues 42–50 (YEPTIFENY) carry the Effector region motif. GTP contacts are provided by residues 67–71 (DTAGQ) and 125–128 (LKCD). Cysteine methyl ester is present on Cys202. The S-geranylgeranyl cysteine moiety is linked to residue Cys202. Residues 203–205 (IIA) constitute a propeptide, removed in mature form.

Belongs to the small GTPase superfamily. Rho family. In terms of assembly, interacts with for3. Post-translationally, palmitoylated by the erf2-erf4 complex.

The protein resides in the cell membrane. Involved in controlling cell shape and septation. Regulates cell separation by modulating the function of the exocyst complex. Involved in post-Golgi vesicle transport. Involved in driving sexual development in a palmitoylation-dependent manner. The polypeptide is GTP-binding protein rho3 (rho3) (Schizosaccharomyces pombe (strain 972 / ATCC 24843) (Fission yeast)).